Reading from the N-terminus, the 452-residue chain is 23S rRNA (uracil(1939)-C(5))-methyltransferase RlmD (452 aa).

One can recognise a TRAM domain in the interval 1 to 57 (METEVNVAEISALDYEGRGVTKVGGKTVFIKGALPSERVGFRIVRQKKQFDEAEAVA). [4Fe-4S] cluster contacts are provided by Cys70, Cys76, Cys79, and Cys157. S-adenosyl-L-methionine-binding residues include Gln269, Phe298, Asn303, Glu319, Asn347, and Asp368. The Nucleophile role is filled by Cys395.

It belongs to the class I-like SAM-binding methyltransferase superfamily. RNA M5U methyltransferase family. RlmD subfamily.

It carries out the reaction uridine(1939) in 23S rRNA + S-adenosyl-L-methionine = 5-methyluridine(1939) in 23S rRNA + S-adenosyl-L-homocysteine + H(+). Functionally, catalyzes the formation of 5-methyl-uridine at position 1939 (m5U1939) in 23S rRNA. The chain is 23S rRNA (uracil(1939)-C(5))-methyltransferase RlmD from Neisseria lactamica (strain 020-06).